A 61-amino-acid chain; its full sequence is Photosystem II reaction center protein K (61 aa).

Residues 1–24 (MPNIFSLICICLNSALQPSGFFFA) constitute a propeptide that is removed on maturation. The helical transmembrane segment at 36 to 56 (IVDFMPVIPVLFFLLAFVWQA) threads the bilayer.

It belongs to the PsbK family. In terms of assembly, PSII is composed of 1 copy each of membrane proteins PsbA, PsbB, PsbC, PsbD, PsbE, PsbF, PsbH, PsbI, PsbJ, PsbK, PsbL, PsbM, PsbT, PsbX, PsbY, PsbZ, Psb30/Ycf12, at least 3 peripheral proteins of the oxygen-evolving complex and a large number of cofactors. It forms dimeric complexes.

It is found in the plastid. Its subcellular location is the chloroplast thylakoid membrane. Functionally, one of the components of the core complex of photosystem II (PSII). PSII is a light-driven water:plastoquinone oxidoreductase that uses light energy to abstract electrons from H(2)O, generating O(2) and a proton gradient subsequently used for ATP formation. It consists of a core antenna complex that captures photons, and an electron transfer chain that converts photonic excitation into a charge separation. The sequence is that of Photosystem II reaction center protein K from Nymphaea alba (White water-lily).